Here is a 251-residue protein sequence, read N- to C-terminus: Capsid protein (251 aa).

The Bipartite nuclear localization signal signature appears at 3-20 (KRDAPWRLMAGTSKVSRS). The Nuclear localization signal signature appears at 35–49 (KAAAWVNRPMYRKPR). Residues 63–80 (CEGPCKVQSYEQRHDISH) fold into a zinc finger. The short motif at 96–117 (ITHRVGKRFCVKSVYILGKIWM) is the Nuclear export signal element. The Bipartite nuclear localization signal motif lies at 195 to 242 (RRFWKVNNHVVYNHQEAGKYENHTENALLLYMACTHASNPVYATLKIR).

It belongs to the geminiviridae capsid protein family. As to quaternary structure, homomultimer. Binds to single-stranded and double-stranded viral DNA. Interacts (via nuclear localization signals) with host importin alpha-1a.

It is found in the virion. It localises to the host nucleus. Its function is as follows. Encapsidates the viral DNA into characteristic twinned ('geminate') particles. Binds the genomic viral ssDNA and shuttles it into and out of the cell nucleus. The CP of bipartite geminiviruses is not required for cell-to-cell or systemic movement. In Squash leaf curl virus (SLCV), this protein is Capsid protein.